The primary structure comprises 521 residues: Proactivator polypeptide-like 1 (521 aa).

Positions 1–17 (MLCALLLLPSLLGATRA) are cleaved as a signal peptide. A propeptide spanning residues 18 to 59 (SPTSGPQECAKGSTVWCQDLQTAARCGAVGYCQGAVWNKPTA) is cleaved from the precursor. The Saposin A-type 1 domain maps to 19–59 (PTSGPQECAKGSTVWCQDLQTAARCGAVGYCQGAVWNKPTA). Saposin B-type domains follow at residues 60–144 (KSLP…EPLQ) and 180–258 (EGAL…EELG). 3 cysteine pairs are disulfide-bonded: Cys-64–Cys-140, Cys-67–Cys-134, and Cys-95–Cys-107. The propeptide occupies 146–180 (HLATLRPLSKEDTFEAVAPFMANGPLTFHPRQAPE). Cystine bridges form between Cys-184/Cys-254, Cys-187/Cys-248, and Cys-213/Cys-224. N-linked (GlcNAc...) asparagine glycosylation is present at Asn-201. The propeptide occupies 259 to 288 (APARLTQVVAMDGVPSLELGLPRKQSEMQM). Saposin B-type domains follow at residues 290 to 370 (AGVT…GNRR) and 392 to 473 (QGSF…HGPR). 3 disulfide bridges follow: Cys-294–Cys-366, Cys-297–Cys-360, and Cys-325–Cys-336. Asn-311 is a glycosylation site (N-linked (GlcNAc...) asparagine). Positions 370–391 (RRARAVHDAYAIVPSPEWDAEN) are excised as a propeptide. Disulfide bonds link Cys-396–Cys-469, Cys-399–Cys-463, and Cys-427–Cys-438. A propeptide spanning residues 474–521 (TPLLGTDQCALGPSFWCRSQEAAKLCNAVQHCQKHVWKEMHLHAGEHA) is cleaved from the precursor. Residues 475-515 (PLLGTDQCALGPSFWCRSQEAAKLCNAVQHCQKHVWKEMHL) enclose the Saposin A-type 2 domain.

It is found in the secreted. In terms of biological role, may activate the lysosomal degradation of sphingolipids. The chain is Proactivator polypeptide-like 1 (PSAPL1) from Homo sapiens (Human).